Consider the following 396-residue polypeptide: Phosphoglycerate kinase (396 aa).

Residues 21–23 (DFN), R36, 59–62 (HFDR), R118, and R151 each bind substrate. ATP contacts are provided by residues K201, E323, and 353 to 356 (GGDT).

Belongs to the phosphoglycerate kinase family. Monomer.

The protein resides in the cytoplasm. It carries out the reaction (2R)-3-phosphoglycerate + ATP = (2R)-3-phospho-glyceroyl phosphate + ADP. It functions in the pathway carbohydrate degradation; glycolysis; pyruvate from D-glyceraldehyde 3-phosphate: step 2/5. In Caulobacter vibrioides (strain ATCC 19089 / CIP 103742 / CB 15) (Caulobacter crescentus), this protein is Phosphoglycerate kinase.